A 492-amino-acid polypeptide reads, in one-letter code: Asparagine--tRNA ligase, mitochondrial (492 aa).

This sequence belongs to the class-II aminoacyl-tRNA synthetase family.

It is found in the mitochondrion matrix. The catalysed reaction is tRNA(Asn) + L-asparagine + ATP = L-asparaginyl-tRNA(Asn) + AMP + diphosphate + H(+). In terms of biological role, catalyzes the attachment of asparagine to tRNA(Asn) in the mitochondrion. The polypeptide is Asparagine--tRNA ligase, mitochondrial (SLM5) (Saccharomyces cerevisiae (strain ATCC 204508 / S288c) (Baker's yeast)).